The sequence spans 951 residues: PE-PGRS family protein PE_PGRS3 (951 aa).

The PE domain occupies 4–94 (VIAAPEVIAA…GAYAAAEAAA (91 aa)). A compositionally biased stretch (basic residues) spans 887 to 919 (CRRQRRADRQRRQRRQRRQSRGHARCRRHRRAA). The tract at residues 887-951 (CRRQRRADRQ…GISCSPQMMP (65 aa)) is disordered.

The protein belongs to the mycobacterial PE family. PGRS subfamily.

The protein localises to the cell outer membrane. It localises to the secreted. It is found in the cell wall. The protein resides in the cell surface. Functionally, the arginine-rich C-terminal region protrudes from the mycobacterial membrane and mediates M.tuberculosis entry into host epithelial cells. May serve as a bridge between mycobacteria and host cells by interacting with specific host phospholipids and extracting them from host cells, for their direct integration or as a source of phosphate, during phases of TB pathogenesis when M.tuberculosis is short of phosphate supply. The protein is PE-PGRS family protein PE_PGRS3 (PE_PGRS3) of Mycobacterium tuberculosis (strain CDC 1551 / Oshkosh).